Here is a 124-residue protein sequence, read N- to C-terminus: Protein MGF 110-4L (124 aa).

Residues 1–18 form the signal peptide; the sequence is MLVIFLGILGLLANQVLG. N64 carries an N-linked (GlcNAc...) asparagine; by host glycan. Positions 121–124 match the Prevents secretion from ER motif; the sequence is KEDL.

It belongs to the asfivirus MGF 110 family.

Its subcellular location is the virion. The protein localises to the host endoplasmic reticulum-Golgi intermediate compartment. Causes the redistribution of lumenal ER protein to an enlarged ERGIC compartment. The polypeptide is Protein MGF 110-4L (Ornithodoros (relapsing fever ticks)).